A 1183-amino-acid polypeptide reads, in one-letter code: DNA-directed RNA polymerase subunit beta (1183 aa).

This sequence belongs to the RNA polymerase beta chain family. In terms of assembly, the RNAP catalytic core consists of 2 alpha, 1 beta, 1 beta' and 1 omega subunit. When a sigma factor is associated with the core the holoenzyme is formed, which can initiate transcription.

The catalysed reaction is RNA(n) + a ribonucleoside 5'-triphosphate = RNA(n+1) + diphosphate. Its function is as follows. DNA-dependent RNA polymerase catalyzes the transcription of DNA into RNA using the four ribonucleoside triphosphates as substrates. This Staphylococcus aureus (strain MRSA252) protein is DNA-directed RNA polymerase subunit beta.